Reading from the N-terminus, the 879-residue chain is Leucine--tRNA ligase (879 aa).

The short motif at 45–55 (PYPSGALHMGH) is the 'HIGH' region element. The 'KMSKS' region signature appears at 637–641 (KMSKS). An ATP-binding site is contributed by Lys-640.

The protein belongs to the class-I aminoacyl-tRNA synthetase family.

The protein localises to the cytoplasm. It carries out the reaction tRNA(Leu) + L-leucine + ATP = L-leucyl-tRNA(Leu) + AMP + diphosphate. In Xylella fastidiosa (strain 9a5c), this protein is Leucine--tRNA ligase.